The chain runs to 221 residues: Pyridoxine/pyridoxamine 5'-phosphate oxidase (221 aa).

The disordered stretch occupies residues Met-1–Arg-21. Substrate contacts are provided by residues Arg-10–Tyr-13 and Lys-68. Residues Arg-63 to Lys-68, Phe-78 to Thr-79, Arg-84, Lys-85, and Gln-107 contribute to the FMN site. The substrate site is built by Tyr-125, Arg-129, and Ser-133. FMN is bound by residues Gln-143–Ser-144 and Trp-189. Residue Arg-195–His-197 coordinates substrate. Arg-199 contributes to the FMN binding site.

Belongs to the pyridoxamine 5'-phosphate oxidase family. In terms of assembly, homodimer. FMN serves as cofactor.

The catalysed reaction is pyridoxamine 5'-phosphate + O2 + H2O = pyridoxal 5'-phosphate + H2O2 + NH4(+). The enzyme catalyses pyridoxine 5'-phosphate + O2 = pyridoxal 5'-phosphate + H2O2. Its pathway is cofactor metabolism; pyridoxal 5'-phosphate salvage; pyridoxal 5'-phosphate from pyridoxamine 5'-phosphate: step 1/1. It functions in the pathway cofactor metabolism; pyridoxal 5'-phosphate salvage; pyridoxal 5'-phosphate from pyridoxine 5'-phosphate: step 1/1. Catalyzes the oxidation of either pyridoxine 5'-phosphate (PNP) or pyridoxamine 5'-phosphate (PMP) into pyridoxal 5'-phosphate (PLP). This is Pyridoxine/pyridoxamine 5'-phosphate oxidase from Thermobifida fusca (strain YX).